The sequence spans 160 residues: Protein-export protein SecB (160 aa).

The protein belongs to the SecB family. As to quaternary structure, homotetramer, a dimer of dimers. One homotetramer interacts with 1 SecA dimer.

The protein resides in the cytoplasm. In terms of biological role, one of the proteins required for the normal export of preproteins out of the cell cytoplasm. It is a molecular chaperone that binds to a subset of precursor proteins, maintaining them in a translocation-competent state. It also specifically binds to its receptor SecA. This Azorhizobium caulinodans (strain ATCC 43989 / DSM 5975 / JCM 20966 / LMG 6465 / NBRC 14845 / NCIMB 13405 / ORS 571) protein is Protein-export protein SecB.